Reading from the N-terminus, the 508-residue chain is Tryptamine 4-monooxygenase (508 aa).

The first 19 residues, 1 to 19, serve as a signal peptide directing secretion; it reads MIAVLFSFVIAGCIYYIVS. A heme-binding site is contributed by Cys439.

It belongs to the cytochrome P450 family. The cofactor is heme.

The catalysed reaction is tryptamine + AH2 + O2 = 4-hydroxytryptamine + A + H2O. Its pathway is secondary metabolite biosynthesis. Cytochrome P450 monooxygenase; part of the gene cluster that mediates the biosynthesis of psilocybin, a psychotropic tryptamine-derived natural product. The first step in the pathway is the decarboxylation of L-tryptophan to tryptamine by the decarboxylase psiD. 4-hydroxy-L-tryptophan is accepted as substrate by psiD as well. The cytochrome P450 monooxygenase psiH then converts tryptamine to 4-hydroxytryptamine. The kinase psiK catalyzes the 4-O-phosphorylation step by converting 4-hydroxytryptamine into norbaeocystin. The methyltransferase psiM then catalyzes iterative methyl transfer to the amino group of norbaeocystin to yield psilocybin via a monomethylated intermediate, baeocystin. In Psilocybe cubensis (Psychedelic mushroom), this protein is Tryptamine 4-monooxygenase.